Consider the following 368-residue polypeptide: MHVARLSIHRLRRFEAVEFHPASTLNLLTGDNGAGKTSVLEALHVMAYGRSFRGRVRDGLIRQGGQDLEIFVEWRERAGDSTERTRRAGLRHSGQEWTGRLDGEDVAQLGSLCAALAVVTFEPGSHVLISGGGEPRRRFLDWGLFHVEPDFLALWRRYARALKQRNALLKQGAQPQMLDAWDHELAESGETLTSRRLQYLERLQERLVPVATAIAPSLGLSALTFAPGWRRHEVSLADALLLARERDRQNGYTSQGPHRADWAPLFDALPGKDALSRGQAKLTALACLLAQAEDFAHERGEWPIMALDDLGSELDRHHQARVIQRLASAPAQVLITATELPPGLADAGKTLRRFHVEHGQLVPTTAAD.

ATP is bound at residue Gly-30–Thr-37.

Belongs to the RecF family.

Its subcellular location is the cytoplasm. In terms of biological role, the RecF protein is involved in DNA metabolism; it is required for DNA replication and normal SOS inducibility. RecF binds preferentially to single-stranded, linear DNA. It also seems to bind ATP. This Xanthomonas campestris pv. campestris (strain 8004) protein is DNA replication and repair protein RecF.